The primary structure comprises 336 residues: Fructose-1,6-bisphosphatase class 1 (336 aa).

Positions 91, 114, 116, and 117 each coordinate Mg(2+). Substrate is bound by residues 117–120 (DGSS), N210, Y243, and K273. E279 is a binding site for Mg(2+).

It belongs to the FBPase class 1 family. In terms of assembly, homotetramer. The cofactor is Mg(2+).

The protein localises to the cytoplasm. It carries out the reaction beta-D-fructose 1,6-bisphosphate + H2O = beta-D-fructose 6-phosphate + phosphate. It functions in the pathway carbohydrate biosynthesis; gluconeogenesis. In Dichelobacter nodosus (strain VCS1703A), this protein is Fructose-1,6-bisphosphatase class 1.